We begin with the raw amino-acid sequence, 554 residues long: Phenylalanine--tRNA ligase beta subunit (554 aa).

The region spanning 276–351 (LSLKSRMISV…INYGYEKFEG (76 aa)) is the B5 domain. The Mg(2+) site is built by Asp329, Asp335, Glu338, and Glu339.

It belongs to the phenylalanyl-tRNA synthetase beta subunit family. Type 2 subfamily. Tetramer of two alpha and two beta subunits. Requires Mg(2+) as cofactor.

Its subcellular location is the cytoplasm. The catalysed reaction is tRNA(Phe) + L-phenylalanine + ATP = L-phenylalanyl-tRNA(Phe) + AMP + diphosphate + H(+). The chain is Phenylalanine--tRNA ligase beta subunit from Methanococcus maripaludis (strain C5 / ATCC BAA-1333).